Reading from the N-terminus, the 210-residue chain is RNA chaperone ProQ (210 aa).

Composition is skewed to basic and acidic residues over residues L103–K124 and R132–K144. The tract at residues L103–K148 is disordered.

This sequence belongs to the ProQ family.

The protein resides in the cytoplasm. RNA chaperone with significant RNA binding, RNA strand exchange and RNA duplexing activities. This chain is RNA chaperone ProQ, found in Aeromonas salmonicida (strain A449).